The sequence spans 693 residues: Alpha-glucosidase (693 aa).

Catalysis depends on residues aspartate 320 and glutamate 323. The Proton donor role is filled by aspartate 416.

This sequence belongs to the glycosyl hydrolase 31 family.

It is found in the cytoplasm. It carries out the reaction Hydrolysis of terminal, non-reducing (1-&gt;4)-linked alpha-D-glucose residues with release of alpha-D-glucose.. Major soluble alpha-glucosidase. The polypeptide is Alpha-glucosidase (malA) (Saccharolobus solfataricus (strain ATCC 35092 / DSM 1617 / JCM 11322 / P2) (Sulfolobus solfataricus)).